Consider the following 249-residue polypeptide: ATP synthase subunit a (249 aa).

Transmembrane regions (helical) follow at residues 26 to 46 (FTNVSAFMVATVVLASGFLYL), 84 to 104 (FFPFVFSLFMFVLVANFIGLF), 114 to 134 (IIVTFALSLLVIGTVIFYGFF), 143 to 163 (LFVPSGVPGIIVPLVVLIEII), 185 to 205 (ITLKVFAGFVVSLSSLGALGI), and 208 to 228 (TVLPLLMTVAITALEFLVAFL).

Belongs to the ATPase A chain family. In terms of assembly, F-type ATPases have 2 components, CF(1) - the catalytic core - and CF(0) - the membrane proton channel. CF(1) has five subunits: alpha(3), beta(3), gamma(1), delta(1), epsilon(1). CF(0) has three main subunits: a(1), b(2) and c(9-12). The alpha and beta chains form an alternating ring which encloses part of the gamma chain. CF(1) is attached to CF(0) by a central stalk formed by the gamma and epsilon chains, while a peripheral stalk is formed by the delta and b chains.

The protein localises to the cell inner membrane. Key component of the proton channel; it plays a direct role in the translocation of protons across the membrane. In Brucella ovis (strain ATCC 25840 / 63/290 / NCTC 10512), this protein is ATP synthase subunit a.